A 317-amino-acid chain; its full sequence is Transaldolase 1 (317 aa).

Lysine 132 serves as the catalytic Schiff-base intermediate with substrate.

This sequence belongs to the transaldolase family. Type 1 subfamily. As to quaternary structure, homodimer.

It localises to the cytoplasm. It catalyses the reaction D-sedoheptulose 7-phosphate + D-glyceraldehyde 3-phosphate = D-erythrose 4-phosphate + beta-D-fructose 6-phosphate. Its pathway is carbohydrate degradation; pentose phosphate pathway; D-glyceraldehyde 3-phosphate and beta-D-fructose 6-phosphate from D-ribose 5-phosphate and D-xylulose 5-phosphate (non-oxidative stage): step 2/3. In terms of biological role, transaldolase is important for the balance of metabolites in the pentose-phosphate pathway. The chain is Transaldolase 1 from Salmonella paratyphi A (strain ATCC 9150 / SARB42).